We begin with the raw amino-acid sequence, 426 residues long: MTTIVDKARNDMAVFEEMESAVRSYSRGWPVVFEKAKGYKLWDKNGNEYIDFFAGAGALNYGHNPSEMQKVMIDYIQNDGVIHSLDMATAPRKKFLESFNEIILKPRNMDYKVMFPGPTGTNTVESALKIARKVTGRDTVIGFTNAFHGMTIGSLSVTGNSFKRNGAGIPLNHAISMPFDQYVDEQDSIAYIERFLEDSGSGVALPAAFILETVQGEGGINAARLEWVKKIEEICRKWDILLIIDDVQAGCGRTGTFFSFEEAGINPDIVCLSKSIGGVGLPMAITLIKPEFDQWGPGEHNGTFRGNNLAFLAATEALNNWKTDAFSQNIKKMSSLFQERMKRIVEKFPELNADLRGRGLMLGIGVHVDGLAGEICAEAFSRGLILETSGAKDEVVKFLPPLIIDEDGIEKGMDILEESIQAALEK.

K274 carries the post-translational modification N6-(pyridoxal phosphate)lysine.

This sequence belongs to the class-III pyridoxal-phosphate-dependent aminotransferase family. Pyridoxal 5'-phosphate is required as a cofactor.

The enzyme catalyses L-2,4-diaminobutanoate + 2-oxoglutarate = L-aspartate 4-semialdehyde + L-glutamate. Its pathway is amine and polyamine biosynthesis; ectoine biosynthesis; L-ectoine from L-aspartate 4-semialdehyde: step 1/3. Its function is as follows. Catalyzes reversively the conversion of L-aspartate beta-semialdehyde (ASA) to L-2,4-diaminobutyrate (DABA) by transamination with L-glutamate. The protein is Diaminobutyrate--2-oxoglutarate transaminase (ectB) of Oceanobacillus iheyensis (strain DSM 14371 / CIP 107618 / JCM 11309 / KCTC 3954 / HTE831).